A 321-amino-acid chain; its full sequence is F420-non-reducing hydrogenase iron-sulfur subunit G (321 aa).

Belongs to the [NiFe]/[NiFeSe] hydrogenase small subunit family. The F420-non-reducing hydrogenase is composed of three subunits; MvhA, MvhD and MvhG. It forms a complex with the heterodisulfide reductase (Hdr).

Its subcellular location is the cytoplasm. In terms of biological role, part of a complex that provides reducing equivalents for heterodisulfide reductase. In Archaeoglobus profundus (strain DSM 5631 / JCM 9629 / NBRC 100127 / Av18), this protein is F420-non-reducing hydrogenase iron-sulfur subunit G (mvhG).